The following is a 143-amino-acid chain: Regulator of ribonuclease activity B (143 aa).

The span at 117–135 shows a compositional bias: acidic residues; that stretch reads DPDAEYDDEDGENEDDESE. The segment at 117-143 is disordered; sequence DPDAEYDDEDGENEDDESESDKSSRLH.

Belongs to the RraB family. In terms of assembly, interacts with the C-terminal region of Rne.

Its subcellular location is the cytoplasm. Functionally, globally modulates RNA abundance by binding to RNase E (Rne) and regulating its endonucleolytic activity. Can modulate Rne action in a substrate-dependent manner by altering the composition of the degradosome. This Proteus mirabilis (strain HI4320) protein is Regulator of ribonuclease activity B.